A 1387-amino-acid polypeptide reads, in one-letter code: DNA-directed RNA polymerase subunit beta'' (1387 aa).

The Zn(2+) site is built by Cys224, Cys295, Cys302, and Cys305. The tract at residues 883–903 (SHTGKRNDPAGSGLIPDNGSD) is disordered.

The protein belongs to the RNA polymerase beta' chain family. RpoC2 subfamily. In plastids the minimal PEP RNA polymerase catalytic core is composed of four subunits: alpha, beta, beta', and beta''. When a (nuclear-encoded) sigma factor is associated with the core the holoenzyme is formed, which can initiate transcription. Requires Zn(2+) as cofactor.

The protein localises to the plastid. Its subcellular location is the chloroplast. It catalyses the reaction RNA(n) + a ribonucleoside 5'-triphosphate = RNA(n+1) + diphosphate. In terms of biological role, DNA-dependent RNA polymerase catalyzes the transcription of DNA into RNA using the four ribonucleoside triphosphates as substrates. In Platanus occidentalis (Sycamore), this protein is DNA-directed RNA polymerase subunit beta''.